A 154-amino-acid polypeptide reads, in one-letter code: Myoglobin (154 aa).

Positions 2–148 constitute a Globin domain; the sequence is GLSDGEWQLV…FRNDMAAKYK (147 aa). Ser4 carries the phosphoserine modification. His65 contacts nitrite. His65 lines the O2 pocket. Residue Thr68 is modified to Phosphothreonine. His94 lines the heme b pocket.

This sequence belongs to the globin family. In terms of assembly, monomeric.

It localises to the cytoplasm. The protein resides in the sarcoplasm. The catalysed reaction is Fe(III)-heme b-[protein] + nitric oxide + H2O = Fe(II)-heme b-[protein] + nitrite + 2 H(+). The enzyme catalyses H2O2 + AH2 = A + 2 H2O. Its function is as follows. Monomeric heme protein which primary function is to store oxygen and facilitate its diffusion within muscle tissues. Reversibly binds oxygen through a pentacoordinated heme iron and enables its timely and efficient release as needed during periods of heightened demand. Depending on the oxidative conditions of tissues and cells, and in addition to its ability to bind oxygen, it also has a nitrite reductase activity whereby it regulates the production of bioactive nitric oxide. Under stress conditions, like hypoxia and anoxia, it also protects cells against reactive oxygen species thanks to its pseudoperoxidase activity. The polypeptide is Myoglobin (MB) (Erythrocebus patas (Red guenon)).